Here is a 354-residue protein sequence, read N- to C-terminus: Membrane progestin receptor beta (354 aa).

The Cytoplasmic segment spans residues 1–75; sequence MTTAILQRLS…FFSLFQKHNE (75 aa). The chain crosses the membrane as a helical span at residues 76-96; sequence VVNVWTHLLAALAVLLRFWAF. Residues 97–111 are Extracellular-facing; it reads VETEGLPWTSAHTLP. Residues 112–132 form a helical membrane-spanning segment; the sequence is LLLYVLSSITYLTFSLLAHLL. The Cytoplasmic segment spans residues 133–174; the sequence is QSKSELSHYTFYFVDYVGVSVYQYGSALVHFFYASDQAWYER. A helical transmembrane segment spans residues 175 to 195; the sequence is FWLFFLPAAAFCGWLSCTGCC. Residues 196-213 are Extracellular-facing; sequence YAKYRYRRPYPVMRKVCQ. The helical transmembrane segment at 214–234 threads the bilayer; the sequence is VVPAGLAFILDISPVAHRVAL. The Cytoplasmic portion of the chain corresponds to 235-243; sequence CHLSGCQEQ. The chain crosses the membrane as a helical span at residues 244 to 264; the sequence is AAWYHTLQIVFFLVSAYFFSC. Over 265–283 the chain is Extracellular; sequence PVPEKYFPGSCDIVGHGHQ. A helical membrane pass occupies residues 284-304; it reads IFHAFLSICTLSQLEAILLDY. At 305–319 the chain is on the cytoplasmic side; it reads KGRQEIFLHRHSPLS. Residues 320-340 traverse the membrane as a helical segment; sequence IYAACLSFFFLVACSGATAAL. Topologically, residues 341–354 are extracellular; it reads LREKIKARLSKKDS.

This sequence belongs to the ADIPOR family.

The protein localises to the cell membrane. Steroid membrane receptor. Binds progesterone. May be involved in oocyte maturation. This Sus scrofa (Pig) protein is Membrane progestin receptor beta (PAQR8).